The following is a 155-amino-acid chain: 3-hydroxyacyl-[acyl-carrier-protein] dehydratase FabZ (155 aa).

H58 is an active-site residue.

Belongs to the thioester dehydratase family. FabZ subfamily.

It is found in the cytoplasm. The catalysed reaction is a (3R)-hydroxyacyl-[ACP] = a (2E)-enoyl-[ACP] + H2O. Involved in unsaturated fatty acids biosynthesis. Catalyzes the dehydration of short chain beta-hydroxyacyl-ACPs and long chain saturated and unsaturated beta-hydroxyacyl-ACPs. This Rhizobium leguminosarum bv. trifolii (strain WSM2304) protein is 3-hydroxyacyl-[acyl-carrier-protein] dehydratase FabZ.